Reading from the N-terminus, the 670-residue chain is uncharacterized protein (670 aa).

A disordered region spans residues 53–83; it reads PTAKPSDFPGDAVTGTQPVPREPSSLPRTTP. 27 consecutive repeat copies span residues 143–158, 171–186, 200–214, 215–233, 234–252, 253–268, 279–293, 294–309, 320–334, 335–349, 362–376, 377–391, 392–406, 407–421, 422–436, 437–452, 464–477, 478–493, 504–517, 518–531, 532–545, 546–559, 560–573, 574–587, 588–601, 602–615, and 616–629. The segment at 187 to 225 is disordered; sequence PAGANDTAVTTTSATPAGANDTAVTTTPATPAGANDTAN. Positions 205 to 225 are enriched in low complexity; the sequence is ANDTAVTTTPATPAGANDTAN. The segment at 339-395 is disordered; it reads GANDTANVTKPAGSTDTVVTTTPAMPTGATDTVVTTTPAMPTGATDTVVTTTPAMPT. Residues 342–362 are compositionally biased toward polar residues; that stretch reads DTANVTKPAGSTDTVVTTTPA. Low complexity predominate over residues 363 to 395; that stretch reads MPTGATDTVVTTTPAMPTGATDTVVTTTPAMPT. Composition is skewed to low complexity over residues 471 to 482 and 490 to 503; these read GTVTTTTAKPTG and TKPT…TTTT. The segment at 471–503 is disordered; sequence GTVTTTTAKPTGANDTANVTKPTGATGTVTTTT. The segment covering 525 to 634 has biased composition (low complexity); the sequence is GTVTTTTAKP…VTTTTAKPAG (110 aa). Positions 525–670 are disordered; it reads GTVTTTTAKP…GHKPKSGARR (146 aa). Residues 638-654 are compositionally biased toward basic residues; the sequence is GHGHGHGHGHGHGHGHG.

This is an uncharacterized protein from Ictalurid herpesvirus 1 (strain Auburn) (IcHV-1).